Consider the following 194-residue polypeptide: Peptidyl-tRNA hydrolase (194 aa).

Tyr-17 provides a ligand contact to tRNA. The active-site Proton acceptor is the His-22. Phe-68, Asn-70, and Asn-116 together coordinate tRNA.

It belongs to the PTH family. Monomer.

The protein resides in the cytoplasm. The enzyme catalyses an N-acyl-L-alpha-aminoacyl-tRNA + H2O = an N-acyl-L-amino acid + a tRNA + H(+). Functionally, hydrolyzes ribosome-free peptidyl-tRNAs (with 1 or more amino acids incorporated), which drop off the ribosome during protein synthesis, or as a result of ribosome stalling. Catalyzes the release of premature peptidyl moieties from peptidyl-tRNA molecules trapped in stalled 50S ribosomal subunits, and thus maintains levels of free tRNAs and 50S ribosomes. The sequence is that of Peptidyl-tRNA hydrolase from Actinobacillus succinogenes (strain ATCC 55618 / DSM 22257 / CCUG 43843 / 130Z).